Consider the following 175-residue polypeptide: Alkyl hydroperoxide reductase AhpD (175 aa).

The active-site Proton donor is cysteine 130. An intrachain disulfide couples cysteine 130 to cysteine 133. Cysteine 133 acts as the Cysteine sulfenic acid (-SOH) intermediate in catalysis.

This sequence belongs to the AhpD family. As to quaternary structure, homotrimer.

The catalysed reaction is N(6)-[(R)-dihydrolipoyl]-L-lysyl-[lipoyl-carrier protein] + a hydroperoxide = N(6)-[(R)-lipoyl]-L-lysyl-[lipoyl-carrier protein] + an alcohol + H2O. Functionally, antioxidant protein with alkyl hydroperoxidase activity. Required for the reduction of the AhpC active site cysteine residues and for the regeneration of the AhpC enzyme activity. The sequence is that of Alkyl hydroperoxide reductase AhpD from Mycobacteroides abscessus (strain ATCC 19977 / DSM 44196 / CCUG 20993 / CIP 104536 / JCM 13569 / NCTC 13031 / TMC 1543 / L948) (Mycobacterium abscessus).